Reading from the N-terminus, the 680-residue chain is Probable galacturonosyltransferase 3 (680 aa).

Over 1–6 (MTTFST) the chain is Cytoplasmic. Residues 7–27 (CAAFLSLVVVLHAVHVGGAIL) form a helical; Signal-anchor for type II membrane protein membrane-spanning segment. Residues 28-680 (ESQAPHRELK…PYLRRCDINE (653 aa)) are Lumenal-facing. A disordered region spans residues 118-146 (SFQNDTGMEDNASHSTTNQTDESENQFPN). 10 N-linked (GlcNAc...) asparagine glycosylation sites follow: Asn-121, Asn-128, Asn-135, Asn-239, Asn-386, Asn-438, Asn-545, Asn-578, Asn-610, and Asn-631. Residues 130–145 (SHSTTNQTDESENQFP) show a composition bias toward polar residues.

It belongs to the glycosyltransferase 8 family. Expressed in roots, inflorescences, siliques, leaves and stems.

The protein resides in the golgi apparatus membrane. It functions in the pathway glycan metabolism; pectin biosynthesis. May be involved in pectin and/or xylans biosynthesis in cell walls. This Arabidopsis thaliana (Mouse-ear cress) protein is Probable galacturonosyltransferase 3 (GAUT3).